The sequence spans 551 residues: Adenine deaminase (551 aa).

The protein belongs to the metallo-dependent hydrolases superfamily. Adenine deaminase family. Mn(2+) is required as a cofactor.

The catalysed reaction is adenine + H2O + H(+) = hypoxanthine + NH4(+). In Methanosarcina barkeri (strain Fusaro / DSM 804), this protein is Adenine deaminase.